The chain runs to 394 residues: Queuine tRNA-ribosyltransferase (394 aa).

Residue Asp99 is the Proton acceptor of the active site. Residues 99-103 (DSGGF), Asp153, Gln195, and Gly222 each bind substrate. Residues 253–259 (GVGHPED) form an RNA binding region. The active-site Nucleophile is Asp272. The interval 277–281 (TRTGR) is RNA binding; important for wobble base 34 recognition. Zn(2+) contacts are provided by Cys310, Cys312, Cys315, and His341.

This sequence belongs to the queuine tRNA-ribosyltransferase family. In terms of assembly, homodimer. Within each dimer, one monomer is responsible for RNA recognition and catalysis, while the other monomer binds to the replacement base PreQ1. It depends on Zn(2+) as a cofactor.

It catalyses the reaction 7-aminomethyl-7-carbaguanine + guanosine(34) in tRNA = 7-aminomethyl-7-carbaguanosine(34) in tRNA + guanine. The protein operates within tRNA modification; tRNA-queuosine biosynthesis. Catalyzes the base-exchange of a guanine (G) residue with the queuine precursor 7-aminomethyl-7-deazaguanine (PreQ1) at position 34 (anticodon wobble position) in tRNAs with GU(N) anticodons (tRNA-Asp, -Asn, -His and -Tyr). Catalysis occurs through a double-displacement mechanism. The nucleophile active site attacks the C1' of nucleotide 34 to detach the guanine base from the RNA, forming a covalent enzyme-RNA intermediate. The proton acceptor active site deprotonates the incoming PreQ1, allowing a nucleophilic attack on the C1' of the ribose to form the product. After dissociation, two additional enzymatic reactions on the tRNA convert PreQ1 to queuine (Q), resulting in the hypermodified nucleoside queuosine (7-(((4,5-cis-dihydroxy-2-cyclopenten-1-yl)amino)methyl)-7-deazaguanosine). The polypeptide is Queuine tRNA-ribosyltransferase (Deinococcus radiodurans (strain ATCC 13939 / DSM 20539 / JCM 16871 / CCUG 27074 / LMG 4051 / NBRC 15346 / NCIMB 9279 / VKM B-1422 / R1)).